The following is a 510-amino-acid chain: Peptide transporter imqJ (510 aa).

3 helical membrane-spanning segments follow: residues 1–21 (MVNQAFMLWCYITPVLGAVVA), 31–51 (IIFSSSVYLCGLVTLFLSSLP), and 57–77 (GISLPGLLVSLFLIGIGTGGI). Residue Asn80 is glycosylated (N-linked (GlcNAc...) asparagine). 4 helical membrane passes run 116–136 (IFTTFFLYINIGSFSPLLITI), 143–163 (FSAAFSLSAITFSIGFIIVLV), 231–251 (IFILYPIYWAAYSQFLTNFIS), and 269–289 (IDPITVLILLPVLDRIVFPFL). The Fe2OG dioxygenase domain occupies 348–468 (PAASEIRLLY…RCSSVFFFKA (121 aa)). The Fe cation site is built by His377 and Asp379. The N-linked (GlcNAc...) asparagine glycan is linked to Asn421. His439 contributes to the Fe cation binding site. Residue Arg459 coordinates 2-oxoglutarate.

This sequence belongs to the major facilitator superfamily. Proton-dependent oligopeptide transporter (POT/PTR) (TC 2.A.17) family.

It localises to the membrane. Functionally, peptide transporter; part of the gene cluster that mediates the biosynthesis of imizoquins A to D, tripeptide-derived alkaloids that serve a protective role against oxidative stress that are essential for normal germination. In Aspergillus flavus (strain ATCC 200026 / FGSC A1120 / IAM 13836 / NRRL 3357 / JCM 12722 / SRRC 167), this protein is Peptide transporter imqJ.